A 400-amino-acid polypeptide reads, in one-letter code: Formate-dependent phosphoribosylglycinamide formyltransferase (400 aa).

Residues 22 to 23 and Glu-82 contribute to the N(1)-(5-phospho-beta-D-ribosyl)glycinamide site; that span reads EL. Residues Arg-115, Lys-157, 162 to 167, 197 to 200, and Glu-205 each bind ATP; these read SSGKGQ and EGFV. Residues 120–315 form the ATP-grasp domain; sequence RLAAETLGLP…EFELHARAIL (196 aa). Glu-274 and Glu-286 together coordinate Mg(2+). Residues Asp-293, Lys-362, and 369-370 contribute to the N(1)-(5-phospho-beta-D-ribosyl)glycinamide site; that span reads RR.

The protein belongs to the PurK/PurT family. Homodimer.

It catalyses the reaction N(1)-(5-phospho-beta-D-ribosyl)glycinamide + formate + ATP = N(2)-formyl-N(1)-(5-phospho-beta-D-ribosyl)glycinamide + ADP + phosphate + H(+). The protein operates within purine metabolism; IMP biosynthesis via de novo pathway; N(2)-formyl-N(1)-(5-phospho-D-ribosyl)glycinamide from N(1)-(5-phospho-D-ribosyl)glycinamide (formate route): step 1/1. In terms of biological role, involved in the de novo purine biosynthesis. Catalyzes the transfer of formate to 5-phospho-ribosyl-glycinamide (GAR), producing 5-phospho-ribosyl-N-formylglycinamide (FGAR). Formate is provided by PurU via hydrolysis of 10-formyl-tetrahydrofolate. The sequence is that of Formate-dependent phosphoribosylglycinamide formyltransferase from Mycolicibacterium vanbaalenii (strain DSM 7251 / JCM 13017 / BCRC 16820 / KCTC 9966 / NRRL B-24157 / PYR-1) (Mycobacterium vanbaalenii).